A 197-amino-acid polypeptide reads, in one-letter code: Imidazoleglycerol-phosphate dehydratase (197 aa).

Belongs to the imidazoleglycerol-phosphate dehydratase family.

It is found in the cytoplasm. The catalysed reaction is D-erythro-1-(imidazol-4-yl)glycerol 3-phosphate = 3-(imidazol-4-yl)-2-oxopropyl phosphate + H2O. Its pathway is amino-acid biosynthesis; L-histidine biosynthesis; L-histidine from 5-phospho-alpha-D-ribose 1-diphosphate: step 6/9. This is Imidazoleglycerol-phosphate dehydratase from Marinomonas sp. (strain MWYL1).